A 211-amino-acid polypeptide reads, in one-letter code: Small ribosomal subunit protein uS3 (211 aa).

One can recognise a KH type-2 domain in the interval 38–106 (LRKFIKKAFY…NIELNIIEVK (69 aa)).

Belongs to the universal ribosomal protein uS3 family. In terms of assembly, part of the 30S ribosomal subunit. Forms a tight complex with proteins S10 and S14.

Binds the lower part of the 30S subunit head. Binds mRNA in the 70S ribosome, positioning it for translation. This is Small ribosomal subunit protein uS3 from Ehrlichia ruminantium (strain Gardel).